We begin with the raw amino-acid sequence, 161 residues long: Crossover junction endodeoxyribonuclease RuvC (161 aa).

Catalysis depends on residues Asp9, Glu72, and Asp144. Asp9, Glu72, and Asp144 together coordinate Mg(2+).

Belongs to the RuvC family. In terms of assembly, homodimer which binds Holliday junction (HJ) DNA. The HJ becomes 2-fold symmetrical on binding to RuvC with unstacked arms; it has a different conformation from HJ DNA in complex with RuvA. In the full resolvosome a probable DNA-RuvA(4)-RuvB(12)-RuvC(2) complex forms which resolves the HJ. Mg(2+) is required as a cofactor.

It localises to the cytoplasm. The enzyme catalyses Endonucleolytic cleavage at a junction such as a reciprocal single-stranded crossover between two homologous DNA duplexes (Holliday junction).. Functionally, the RuvA-RuvB-RuvC complex processes Holliday junction (HJ) DNA during genetic recombination and DNA repair. Endonuclease that resolves HJ intermediates. Cleaves cruciform DNA by making single-stranded nicks across the HJ at symmetrical positions within the homologous arms, yielding a 5'-phosphate and a 3'-hydroxyl group; requires a central core of homology in the junction. The consensus cleavage sequence is 5'-(A/T)TT(C/G)-3'. Cleavage occurs on the 3'-side of the TT dinucleotide at the point of strand exchange. HJ branch migration catalyzed by RuvA-RuvB allows RuvC to scan DNA until it finds its consensus sequence, where it cleaves and resolves the cruciform DNA. The polypeptide is Crossover junction endodeoxyribonuclease RuvC (Synechococcus sp. (strain ATCC 27144 / PCC 6301 / SAUG 1402/1) (Anacystis nidulans)).